The following is a 526-amino-acid chain: Collagen alpha-2(I) chain (526 aa).

Residues 1–291 (GFPGEKGPSG…PRSPPSLRPK (291 aa)) form a disordered region. Composition is skewed to low complexity over residues 9–36 (SGEA…LGLP), 44–81 (LPGV…NGAP), and 110–131 (YPGN…SVGP). Positions 165–176 (RGDKGEPGDKGP) are enriched in basic and acidic residues. Positions 249-261 (AGPPGPPGPPGPP) are enriched in pro residues. Residues 263 to 526 (ASGGGYDFGY…YVDVGPVCFK (264 aa)) constitute a propeptide, C-terminal propeptide. Residues 293 to 526 (YEVDATLKSL…YVDVGPVCFK (234 aa)) form the Fibrillar collagen NC1 domain. Intrachain disulfides connect C323/C355, C363/C524, and C432/C477. Residues D341, N343, Q344, C346, and D349 each coordinate Ca(2+).

Belongs to the fibrillar collagen family. As to quaternary structure, trimers of one alpha 2(I) and two alpha 1(I) chains. Interacts (via C-terminus) with TMEM131 (via PapD-L domain); the interaction is direct and is involved in assembly and TRAPPIII ER-to-Golgi transport complex-dependent secretion of collagen. Post-translationally, prolines at the third position of the tripeptide repeating unit (G-X-Y) are hydroxylated in some or all of the chains. As to expression, forms the fibrils of tendon, ligaments and bones. In bones the fibrils are mineralized with calcium hydroxyapatite.

The protein localises to the secreted. The protein resides in the extracellular space. Its subcellular location is the extracellular matrix. Functionally, type I collagen is a member of group I collagen (fibrillar forming collagen). The protein is Collagen alpha-2(I) chain (COL1A2) of Oryctolagus cuniculus (Rabbit).